A 323-amino-acid polypeptide reads, in one-letter code: Transcription initiation factor IIB 7 (323 aa).

Over residues 1–16 (MTRSTRQRERETAAKQ) the composition is skewed to basic and acidic residues. Residues 1 to 35 (MTRSTRQRERETAAKQEEEEDSEEGVRECPECGSD) are disordered. The segment at 24 to 56 (EGVRECPECGSDNLVKSSDRAELVCNDCGLVVE) adopts a TFIIB-type zinc-finger fold. Residues Cys29, Cys32, Cys48, and Cys51 each coordinate Zn(2+). 2 repeat units span residues 142–225 (SEID…SQEL) and 236–317 (KYVP…EQIE).

The protein belongs to the TFIIB family.

Functionally, stabilizes TBP binding to an archaeal box-A promoter. Also responsible for recruiting RNA polymerase II to the pre-initiation complex (DNA-TBP-TFIIB). The protein is Transcription initiation factor IIB 7 of Halobacterium salinarum (strain ATCC 700922 / JCM 11081 / NRC-1) (Halobacterium halobium).